A 244-amino-acid chain; its full sequence is Large ribosomal subunit protein uL30A (244 aa).

Residues 1-26 (MAAEKILTPESQLKKSKAQQKTAEQV) are disordered.

It belongs to the universal ribosomal protein uL30 family. As to quaternary structure, component of the large ribosomal subunit (LSU). Mature yeast ribosomes consist of a small (40S) and a large (60S) subunit. The 40S small subunit contains 1 molecule of ribosomal RNA (18S rRNA) and 33 different proteins (encoded by 57 genes). The large 60S subunit contains 3 rRNA molecules (25S, 5.8S and 5S rRNA) and 46 different proteins (encoded by 81 genes).

Its subcellular location is the cytoplasm. Functionally, component of the ribosome, a large ribonucleoprotein complex responsible for the synthesis of proteins in the cell. The small ribosomal subunit (SSU) binds messenger RNAs (mRNAs) and translates the encoded message by selecting cognate aminoacyl-transfer RNA (tRNA) molecules. The large subunit (LSU) contains the ribosomal catalytic site termed the peptidyl transferase center (PTC), which catalyzes the formation of peptide bonds, thereby polymerizing the amino acids delivered by tRNAs into a polypeptide chain. The nascent polypeptides leave the ribosome through a tunnel in the LSU and interact with protein factors that function in enzymatic processing, targeting, and the membrane insertion of nascent chains at the exit of the ribosomal tunnel. The chain is Large ribosomal subunit protein uL30A from Saccharomyces cerevisiae (strain ATCC 204508 / S288c) (Baker's yeast).